We begin with the raw amino-acid sequence, 511 residues long: Sodium/proline symporter 2 (511 aa).

A run of 13 helical transmembrane segments spans residues Trp16–Gly36, Ile54–Met74, Leu85–Val105, Ile139–Ser159, Gly175–Val195, Val204–Ile224, Val246–Ile266, Ile286–Phe306, Ile327–Ser347, Phe381–Trp401, Leu410–Leu430, Thr438–Ile458, and Leu467–Val487.

This sequence belongs to the sodium:solute symporter (SSF) (TC 2.A.21) family.

The protein localises to the cell membrane. It catalyses the reaction L-proline(in) + Na(+)(in) = L-proline(out) + Na(+)(out). Catalyzes the sodium-dependent uptake of extracellular L-proline. This Staphylococcus saprophyticus subsp. saprophyticus (strain ATCC 15305 / DSM 20229 / NCIMB 8711 / NCTC 7292 / S-41) protein is Sodium/proline symporter 2 (putP2).